Reading from the N-terminus, the 279-residue chain is Proteasome subunit beta (279 aa).

A propeptide spans 1 to 53 (removed in mature form; by autocatalysis); the sequence is MAAAFDPSGRLPDLFTSAGTSSFSAFLSMAAPELLPGRRPLPPGTAADLTPHA. The Nucleophile role is filled by T54.

It belongs to the peptidase T1B family. In terms of assembly, the 20S proteasome core is composed of 14 alpha and 14 beta subunits that assemble into four stacked heptameric rings, resulting in a barrel-shaped structure. The two inner rings, each composed of seven catalytic beta subunits, are sandwiched by two outer rings, each composed of seven alpha subunits. The catalytic chamber with the active sites is on the inside of the barrel. Has a gated structure, the ends of the cylinder being occluded by the N-termini of the alpha-subunits. Is capped by the proteasome-associated ATPase, ARC.

The protein localises to the cytoplasm. It carries out the reaction Cleavage of peptide bonds with very broad specificity.. It participates in protein degradation; proteasomal Pup-dependent pathway. With respect to regulation, the formation of the proteasomal ATPase ARC-20S proteasome complex, likely via the docking of the C-termini of ARC into the intersubunit pockets in the alpha-rings, may trigger opening of the gate for substrate entry. Interconversion between the open-gate and close-gate conformations leads to a dynamic regulation of the 20S proteasome proteolysis activity. Functionally, component of the proteasome core, a large protease complex with broad specificity involved in protein degradation. The protein is Proteasome subunit beta of Salinispora arenicola (strain CNS-205).